Here is a 302-residue protein sequence, read N- to C-terminus: Bifunctional protein FolD (302 aa).

NADP(+)-binding positions include 168-170 (GRS), Thr197, and Val238.

Belongs to the tetrahydrofolate dehydrogenase/cyclohydrolase family. In terms of assembly, homodimer.

The enzyme catalyses (6R)-5,10-methylene-5,6,7,8-tetrahydrofolate + NADP(+) = (6R)-5,10-methenyltetrahydrofolate + NADPH. It carries out the reaction (6R)-5,10-methenyltetrahydrofolate + H2O = (6R)-10-formyltetrahydrofolate + H(+). It participates in one-carbon metabolism; tetrahydrofolate interconversion. Its function is as follows. Catalyzes the oxidation of 5,10-methylenetetrahydrofolate to 5,10-methenyltetrahydrofolate and then the hydrolysis of 5,10-methenyltetrahydrofolate to 10-formyltetrahydrofolate. In Desulfatibacillum aliphaticivorans, this protein is Bifunctional protein FolD.